The sequence spans 245 residues: Ubiquinone/menaquinone biosynthesis C-methyltransferase UbiE (245 aa).

Residues Thr-71, Asp-92, and 118–119 contribute to the S-adenosyl-L-methionine site; that span reads DA.

The protein belongs to the class I-like SAM-binding methyltransferase superfamily. MenG/UbiE family.

The catalysed reaction is a 2-demethylmenaquinol + S-adenosyl-L-methionine = a menaquinol + S-adenosyl-L-homocysteine + H(+). It carries out the reaction a 2-methoxy-6-(all-trans-polyprenyl)benzene-1,4-diol + S-adenosyl-L-methionine = a 5-methoxy-2-methyl-3-(all-trans-polyprenyl)benzene-1,4-diol + S-adenosyl-L-homocysteine + H(+). Its pathway is quinol/quinone metabolism; menaquinone biosynthesis; menaquinol from 1,4-dihydroxy-2-naphthoate: step 2/2. It functions in the pathway cofactor biosynthesis; ubiquinone biosynthesis. In terms of biological role, methyltransferase required for the conversion of demethylmenaquinol (DMKH2) to menaquinol (MKH2) and the conversion of 2-polyprenyl-6-methoxy-1,4-benzoquinol (DDMQH2) to 2-polyprenyl-3-methyl-6-methoxy-1,4-benzoquinol (DMQH2). The polypeptide is Ubiquinone/menaquinone biosynthesis C-methyltransferase UbiE (Neisseria gonorrhoeae (strain ATCC 700825 / FA 1090)).